A 375-amino-acid polypeptide reads, in one-letter code: Tyrosine--tRNA ligase (375 aa).

Residues tyrosine 37, tyrosine 168, glutamine 172, aspartate 175, and glutamine 190 each coordinate L-tyrosine. The short motif at lysine 251 to serine 255 is the 'KMSKS' region element. Lysine 254 provides a ligand contact to ATP.

This sequence belongs to the class-I aminoacyl-tRNA synthetase family. TyrS type 4 subfamily. In terms of assembly, homodimer.

The protein resides in the cytoplasm. It catalyses the reaction tRNA(Tyr) + L-tyrosine + ATP = L-tyrosyl-tRNA(Tyr) + AMP + diphosphate + H(+). Catalyzes the attachment of tyrosine to tRNA(Tyr) in a two-step reaction: tyrosine is first activated by ATP to form Tyr-AMP and then transferred to the acceptor end of tRNA(Tyr). This chain is Tyrosine--tRNA ligase, found in Thermococcus sibiricus (strain DSM 12597 / MM 739).